Consider the following 337-residue polypeptide: Phenylalanine--tRNA ligase alpha subunit (337 aa).

Glu252 contributes to the Mg(2+) binding site.

It belongs to the class-II aminoacyl-tRNA synthetase family. Phe-tRNA synthetase alpha subunit type 1 subfamily. In terms of assembly, tetramer of two alpha and two beta subunits. Mg(2+) is required as a cofactor.

The protein localises to the cytoplasm. It catalyses the reaction tRNA(Phe) + L-phenylalanine + ATP = L-phenylalanyl-tRNA(Phe) + AMP + diphosphate + H(+). The protein is Phenylalanine--tRNA ligase alpha subunit of Francisella tularensis subsp. holarctica (strain OSU18).